A 715-amino-acid polypeptide reads, in one-letter code: Fatty acid oxidation complex subunit alpha (715 aa).

An enoyl-CoA hydratase region spans residues 1–190 (MTTTSAFMLN…KAGLVDDVVP (190 aa)). Residues 306 to 715 (GPLNSVGILG…WTNGETDQGN (410 aa)) are 3-hydroxyacyl-CoA dehydrogenase.

The protein in the N-terminal section; belongs to the enoyl-CoA hydratase/isomerase family. This sequence in the central section; belongs to the 3-hydroxyacyl-CoA dehydrogenase family. As to quaternary structure, heterotetramer of two alpha chains (FadJ) and two beta chains (FadI).

Its subcellular location is the cytoplasm. The catalysed reaction is a (3S)-3-hydroxyacyl-CoA = a (2E)-enoyl-CoA + H2O. The enzyme catalyses a 4-saturated-(3S)-3-hydroxyacyl-CoA = a (3E)-enoyl-CoA + H2O. It catalyses the reaction a (3S)-3-hydroxyacyl-CoA + NAD(+) = a 3-oxoacyl-CoA + NADH + H(+). It carries out the reaction (3S)-3-hydroxybutanoyl-CoA = (3R)-3-hydroxybutanoyl-CoA. It participates in lipid metabolism; fatty acid beta-oxidation. Catalyzes the formation of a hydroxyacyl-CoA by addition of water on enoyl-CoA. Also exhibits 3-hydroxyacyl-CoA epimerase and 3-hydroxyacyl-CoA dehydrogenase activities. In Salmonella paratyphi B (strain ATCC BAA-1250 / SPB7), this protein is Fatty acid oxidation complex subunit alpha.